Reading from the N-terminus, the 202-residue chain is Holliday junction branch migration complex subunit RuvA (202 aa).

Positions Met1 to Ala64 are domain I. Positions Gly65 to Ala143 are domain II. Residues Leu144 to Pro154 form a flexible linker region. Positions Pro154–Ile202 are domain III.

The protein belongs to the RuvA family. In terms of assembly, homotetramer. Forms an RuvA(8)-RuvB(12)-Holliday junction (HJ) complex. HJ DNA is sandwiched between 2 RuvA tetramers; dsDNA enters through RuvA and exits via RuvB. An RuvB hexamer assembles on each DNA strand where it exits the tetramer. Each RuvB hexamer is contacted by two RuvA subunits (via domain III) on 2 adjacent RuvB subunits; this complex drives branch migration. In the full resolvosome a probable DNA-RuvA(4)-RuvB(12)-RuvC(2) complex forms which resolves the HJ.

It is found in the cytoplasm. In terms of biological role, the RuvA-RuvB-RuvC complex processes Holliday junction (HJ) DNA during genetic recombination and DNA repair, while the RuvA-RuvB complex plays an important role in the rescue of blocked DNA replication forks via replication fork reversal (RFR). RuvA specifically binds to HJ cruciform DNA, conferring on it an open structure. The RuvB hexamer acts as an ATP-dependent pump, pulling dsDNA into and through the RuvAB complex. HJ branch migration allows RuvC to scan DNA until it finds its consensus sequence, where it cleaves and resolves the cruciform DNA. The polypeptide is Holliday junction branch migration complex subunit RuvA (Pseudomonas fluorescens (strain Pf0-1)).